The following is a 485-amino-acid chain: Cysteine--tRNA ligase (485 aa).

Cys29 lines the Zn(2+) pocket. A 'HIGH' region motif is present at residues 31–41 (ATVQGMPHVGH). Residues 174–198 (QRVEDMQDAPDADPRGKRDPHDFAL) are disordered. A compositionally biased stretch (basic and acidic residues) spans 185–197 (ADPRGKRDPHDFA). Zn(2+)-binding residues include Cys227, His252, and Glu256. The short motif at 283-287 (KMSKS) is the 'KMSKS' region element. Lys286 contacts ATP.

The protein belongs to the class-I aminoacyl-tRNA synthetase family. As to quaternary structure, monomer. Requires Zn(2+) as cofactor.

It is found in the cytoplasm. It catalyses the reaction tRNA(Cys) + L-cysteine + ATP = L-cysteinyl-tRNA(Cys) + AMP + diphosphate. This Micrococcus luteus (strain ATCC 4698 / DSM 20030 / JCM 1464 / CCM 169 / CCUG 5858 / IAM 1056 / NBRC 3333 / NCIMB 9278 / NCTC 2665 / VKM Ac-2230) (Micrococcus lysodeikticus) protein is Cysteine--tRNA ligase.